The chain runs to 432 residues: Tubulin-specific chaperone cofactor E-like protein (432 aa).

7 LRR repeats span residues 69–94 (ASHV…ILKN), 95–117 (LPHL…HELP), 118–140 (VSTL…QSFL), 143–167 (LPKV…EPIS), 168–191 (TTVR…NVVK), 193–217 (FPNV…HFEQ), and 218–242 (LPFW…QLNR). The interval 254–295 (IPLLDALTNEERLHLIIGRLHHLRVLNGSKISSEQREQSERF) is LRRCT. The interval 324–415 (VTIDLTPKKE…GDSFLVQEKI (92 aa)) is ubiquitin-like (UBL).

It localises to the cytoplasm. The protein localises to the cytoskeleton. In terms of biological role, acts as a regulator of tubulin stability. Involved in microtubule-dependent neuronal function. May be involved in tubulin acetylation/deacetylation pathway. The chain is Tubulin-specific chaperone cofactor E-like protein from Caenorhabditis elegans.